The sequence spans 170 residues: Phosphopantetheine adenylyltransferase (170 aa).

Thr-17 lines the substrate pocket. ATP is bound by residues 17 to 18 (TF) and His-25. The substrate site is built by Lys-49, Leu-81, and Arg-95. Residues 96–98 (GLR), Glu-106, and 131–137 (LMYISST) contribute to the ATP site.

Belongs to the bacterial CoaD family. In terms of assembly, homohexamer. Mg(2+) serves as cofactor.

It is found in the cytoplasm. It carries out the reaction (R)-4'-phosphopantetheine + ATP + H(+) = 3'-dephospho-CoA + diphosphate. It participates in cofactor biosynthesis; coenzyme A biosynthesis; CoA from (R)-pantothenate: step 4/5. Its function is as follows. Reversibly transfers an adenylyl group from ATP to 4'-phosphopantetheine, yielding dephospho-CoA (dPCoA) and pyrophosphate. The chain is Phosphopantetheine adenylyltransferase from Legionella pneumophila subsp. pneumophila (strain Philadelphia 1 / ATCC 33152 / DSM 7513).